A 231-amino-acid polypeptide reads, in one-letter code: MAVERKFIAEGARKARVEKYLTKELKRAGFGGMDIARTPLGTQVTIFAEKPGIVIGKGGKLVHQLTQDLAQNYGVESPQIEVQQVQNPSFNAQIMAERLANALERGWYFRKAGSSIMRRVMDSGALGCEVVIAGKLTGARARTQKFTEGYIKHCGEPSNTIVEKGYAIAIKKLGVIGVQVKIVPADAKMPDHFAIIEQEKKLPAPKTTVTAVIETDNEEPALPDENIDEEV.

One can recognise a KH type-2 domain in the interval 17–86; that stretch reads VEKYLTKELK…SPQIEVQQVQ (70 aa).

It belongs to the universal ribosomal protein uS3 family. In terms of assembly, part of the 30S ribosomal subunit.

Functionally, binds the lower part of the 30S subunit head. This chain is Small ribosomal subunit protein uS3, found in Methanoregula boonei (strain DSM 21154 / JCM 14090 / 6A8).